A 363-amino-acid polypeptide reads, in one-letter code: UDP-N-acetylglucosamine--N-acetylmuramyl-(pentapeptide) pyrophosphoryl-undecaprenol N-acetylglucosamine transferase (363 aa).

Residues 15–17, N127, R169, S197, I251, 270–275, and Q296 contribute to the UDP-N-acetyl-alpha-D-glucosamine site; these read TGG and ALTVSE.

It belongs to the glycosyltransferase 28 family. MurG subfamily.

It is found in the cell inner membrane. It catalyses the reaction di-trans,octa-cis-undecaprenyl diphospho-N-acetyl-alpha-D-muramoyl-L-alanyl-D-glutamyl-meso-2,6-diaminopimeloyl-D-alanyl-D-alanine + UDP-N-acetyl-alpha-D-glucosamine = di-trans,octa-cis-undecaprenyl diphospho-[N-acetyl-alpha-D-glucosaminyl-(1-&gt;4)]-N-acetyl-alpha-D-muramoyl-L-alanyl-D-glutamyl-meso-2,6-diaminopimeloyl-D-alanyl-D-alanine + UDP + H(+). It functions in the pathway cell wall biogenesis; peptidoglycan biosynthesis. Functionally, cell wall formation. Catalyzes the transfer of a GlcNAc subunit on undecaprenyl-pyrophosphoryl-MurNAc-pentapeptide (lipid intermediate I) to form undecaprenyl-pyrophosphoryl-MurNAc-(pentapeptide)GlcNAc (lipid intermediate II). The protein is UDP-N-acetylglucosamine--N-acetylmuramyl-(pentapeptide) pyrophosphoryl-undecaprenol N-acetylglucosamine transferase of Dichelobacter nodosus (strain VCS1703A).